Reading from the N-terminus, the 396-residue chain is Tryptophan synthase beta chain (396 aa).

Lys-86 is subject to N6-(pyridoxal phosphate)lysine.

Belongs to the TrpB family. In terms of assembly, tetramer of two alpha and two beta chains. Pyridoxal 5'-phosphate serves as cofactor.

The enzyme catalyses (1S,2R)-1-C-(indol-3-yl)glycerol 3-phosphate + L-serine = D-glyceraldehyde 3-phosphate + L-tryptophan + H2O. The protein operates within amino-acid biosynthesis; L-tryptophan biosynthesis; L-tryptophan from chorismate: step 5/5. Functionally, the beta subunit is responsible for the synthesis of L-tryptophan from indole and L-serine. This chain is Tryptophan synthase beta chain, found in Vibrio atlanticus (strain LGP32) (Vibrio splendidus (strain Mel32)).